Reading from the N-terminus, the 396-residue chain is Probable arginine kinase F46H5.3 (396 aa).

The region spanning 47 to 129 (KIEEGYAKLQ…FDPLIQDYHN (83 aa)) is the Phosphagen kinase N-terminal domain. Residue 102 to 106 (GVGVY) coordinates substrate. Residues 159 to 396 (FINSTRIRCG…AHLIALEKAA (238 aa)) form the Phosphagen kinase C-terminal domain. ATP contacts are provided by residues 162–166 (STRIR) and His226. Residue Glu266 coordinates substrate. An ATP-binding site is contributed by Arg270. Residue Cys312 participates in substrate binding. ATP-binding positions include 321-325 (RASVH), 349-354 (RGIHGE), and Asp364. Glu354 contacts substrate.

The protein belongs to the ATP:guanido phosphotransferase family.

The catalysed reaction is L-arginine + ATP = N(omega)-phospho-L-arginine + ADP + H(+). This chain is Probable arginine kinase F46H5.3, found in Caenorhabditis elegans.